The following is a 369-amino-acid chain: Glutamate 5-kinase (369 aa).

Lys-14 serves as a coordination point for ATP. Substrate is bound by residues Ser-54, Asp-141, and Asn-153. Residues 173 to 174 and 215 to 221 contribute to the ATP site; these read SD and TGGMVTK. A PUA domain is found at 277–355; the sequence is RGRLHLDPGA…SELATALGPA (79 aa).

The protein belongs to the glutamate 5-kinase family.

It localises to the cytoplasm. It catalyses the reaction L-glutamate + ATP = L-glutamyl 5-phosphate + ADP. It participates in amino-acid biosynthesis; L-proline biosynthesis; L-glutamate 5-semialdehyde from L-glutamate: step 1/2. Functionally, catalyzes the transfer of a phosphate group to glutamate to form L-glutamate 5-phosphate. The chain is Glutamate 5-kinase from Salinispora arenicola (strain CNS-205).